Here is a 58-residue protein sequence, read N- to C-terminus: Large ribosomal subunit protein bL32 (58 aa).

Positions 1 to 20 are enriched in basic residues; it reads MALPKHKKSKSKRDKRRTHQ. Residues 1 to 26 form a disordered region; it reads MALPKHKKSKSKRDKRRTHQKLTAPN.

It belongs to the bacterial ribosomal protein bL32 family.

The polypeptide is Large ribosomal subunit protein bL32 (Desulfatibacillum aliphaticivorans).